A 337-amino-acid polypeptide reads, in one-letter code: Diacylglycerol O-acyltransferase 2-like protein 6 (337 aa).

2 helical membrane passes run 22–42 (IPVYIFLGAIPILLIPYFLLF) and 102–122 (YIIANHPHGILSFGVFINFAT).

The protein belongs to the diacylglycerol acyltransferase family. As to expression, expressed in all tissues tested except pancreas.

It localises to the endoplasmic reticulum membrane. It catalyses the reaction 1,2-di-(9Z-octadecenoyl)-sn-glycerol + (9Z)-octadecenoyl-CoA = 1,2,3-tri-(9Z-octadecenoyl)-glycerol + CoA. It carries out the reaction 1-O-(9Z-octadecenyl)-glycerol + (9Z)-octadecenoyl-CoA = 1-O-(9Z-octadecyl)-3-(9Z-octadecenoyl)-glycerol + CoA. The catalysed reaction is 1-(9Z-octadecenoyl)-glycerol + (9Z)-octadecenoyl-CoA = 1,2-di-(9Z-octadecenoyl)-glycerol + CoA. Functionally, diglyceride acyltransferase that uses fatty acyl-CoA as substrate. Particularly active with oleate as a substrate. Has no wax synthase activity to produce wax esters. Able to use 1-monoalkylglycerol (1-MAkG) as an acyl acceptor for the synthesis of monoalkyl-monoacylglycerol (MAMAG). The polypeptide is Diacylglycerol O-acyltransferase 2-like protein 6 (Homo sapiens (Human)).